We begin with the raw amino-acid sequence, 350 residues long: Phenylalanine--tRNA ligase alpha subunit (350 aa).

Residue glutamate 260 participates in Mg(2+) binding.

The protein belongs to the class-II aminoacyl-tRNA synthetase family. Phe-tRNA synthetase alpha subunit type 1 subfamily. As to quaternary structure, tetramer of two alpha and two beta subunits. Mg(2+) serves as cofactor.

The protein resides in the cytoplasm. The enzyme catalyses tRNA(Phe) + L-phenylalanine + ATP = L-phenylalanyl-tRNA(Phe) + AMP + diphosphate + H(+). The chain is Phenylalanine--tRNA ligase alpha subunit from Mycoplasma capricolum subsp. capricolum (strain California kid / ATCC 27343 / NCTC 10154).